Reading from the N-terminus, the 281-residue chain is Sulfur carrier protein FdhD (281 aa).

Cysteine 117 acts as the Cysteine persulfide intermediate in catalysis.

This sequence belongs to the FdhD family.

The protein resides in the cytoplasm. Functionally, required for formate dehydrogenase (FDH) activity. Acts as a sulfur carrier protein that transfers sulfur from IscS to the molybdenum cofactor prior to its insertion into FDH. The sequence is that of Sulfur carrier protein FdhD from Xanthomonas axonopodis pv. citri (strain 306).